Consider the following 546-residue polypeptide: Glucose-6-phosphate isomerase (546 aa).

Glu-357 serves as the catalytic Proton donor. Residues His-389 and Lys-509 contribute to the active site.

This sequence belongs to the GPI family.

It is found in the cytoplasm. The enzyme catalyses alpha-D-glucose 6-phosphate = beta-D-fructose 6-phosphate. Its pathway is carbohydrate biosynthesis; gluconeogenesis. It participates in carbohydrate degradation; glycolysis; D-glyceraldehyde 3-phosphate and glycerone phosphate from D-glucose: step 2/4. Its function is as follows. Catalyzes the reversible isomerization of glucose-6-phosphate to fructose-6-phosphate. This Anaeromyxobacter sp. (strain K) protein is Glucose-6-phosphate isomerase.